A 154-amino-acid chain; its full sequence is Ribosome maturation factor RimP (154 aa).

It belongs to the RimP family.

Its subcellular location is the cytoplasm. Required for maturation of 30S ribosomal subunits. The chain is Ribosome maturation factor RimP from Clostridium perfringens (strain SM101 / Type A).